The chain runs to 975 residues: Exportin-2 (975 aa).

The Importin N-terminal domain occupies A29 to H105.

The protein belongs to the XPO2/CSE1 family. In terms of assembly, binds with high affinity to importin-alpha only in the presence of RanGTP.

The protein resides in the cytoplasm. It is found in the nucleus. Functionally, export receptor for importin alpha. Mediates importin-alpha re-export from the nucleus to the cytoplasm after import substrates have been released into the nucleoplasm. The protein is Exportin-2 of Drosophila melanogaster (Fruit fly).